Consider the following 1649-residue polypeptide: DNA-directed RNA polymerase subunit beta' (1649 aa).

Zn(2+) contacts are provided by cysteine 63, cysteine 65, cysteine 78, and cysteine 81. Mg(2+)-binding residues include aspartate 747, aspartate 749, and aspartate 751. Residues cysteine 1078, cysteine 1269, cysteine 1276, and cysteine 1279 each contribute to the Zn(2+) site.

It belongs to the RNA polymerase beta' chain family. The RNAP catalytic core consists of 2 alpha, 1 beta, 1 beta' and 1 omega subunit. When a sigma factor is associated with the core the holoenzyme is formed, which can initiate transcription. It depends on Mg(2+) as a cofactor. The cofactor is Zn(2+).

It catalyses the reaction RNA(n) + a ribonucleoside 5'-triphosphate = RNA(n+1) + diphosphate. DNA-dependent RNA polymerase catalyzes the transcription of DNA into RNA using the four ribonucleoside triphosphates as substrates. This chain is DNA-directed RNA polymerase subunit beta', found in Thermosipho melanesiensis (strain DSM 12029 / CIP 104789 / BI429).